The chain runs to 40 residues: Protein P4 (40 aa).

Residues 10–29 (KYFAYGVAISAAGAILAEYV) traverse the membrane as a helical segment.

It is found in the virion membrane. May interact with the viral DNA. The protein is Protein P4 (IV) of Pseudoalteromonas phage PM2 (Bacteriophage PM2).